An 812-amino-acid polypeptide reads, in one-letter code: Mitochondrial intermediate peptidase (812 aa).

Residues 1–35 (MLKLLRPRPWVCNSCLNRVAFPKPYPVGSRSTRWL) constitute a mitochondrion transit peptide. Residues 518-544 (STSEGGPAFGSPESAANDGMAASRGAS) form a disordered region. H587 contributes to the Zn(2+) binding site. E588 is an active-site residue. 2 residues coordinate Zn(2+): H591 and H594.

This sequence belongs to the peptidase M3 family. Zn(2+) is required as a cofactor.

The protein localises to the mitochondrion matrix. The enzyme catalyses Release of an N-terminal octapeptide as second stage of processing of some proteins imported into the mitochondrion.. In terms of biological role, cleaves proteins, imported into the mitochondrion, to their mature size. While most mitochondrial precursor proteins are processed to the mature form in one step by mitochondrial processing peptidase (MPP), the sequential cleavage by MIP of an octapeptide after initial processing by MPP is a required step for a subgroup of nuclear-encoded precursor proteins destined for the matrix or the inner membrane. The polypeptide is Mitochondrial intermediate peptidase (OCT1) (Pyricularia oryzae (strain 70-15 / ATCC MYA-4617 / FGSC 8958) (Rice blast fungus)).